An 87-amino-acid polypeptide reads, in one-letter code: Translation initiation factor IF-1 2 (87 aa).

Residues 1-72 form the S1-like domain; the sequence is MAADDHIEME…TKGRIARRTT (72 aa). The disordered stretch occupies residues 65-87; sequence GRIARRTTTPSGGPRPARSGNRR.

The protein belongs to the IF-1 family. As to quaternary structure, component of the 30S ribosomal translation pre-initiation complex which assembles on the 30S ribosome in the order IF-2 and IF-3, IF-1 and N-formylmethionyl-tRNA(fMet); mRNA recruitment can occur at any time during PIC assembly.

It is found in the cytoplasm. One of the essential components for the initiation of protein synthesis. Stabilizes the binding of IF-2 and IF-3 on the 30S subunit to which N-formylmethionyl-tRNA(fMet) subsequently binds. Helps modulate mRNA selection, yielding the 30S pre-initiation complex (PIC). Upon addition of the 50S ribosomal subunit IF-1, IF-2 and IF-3 are released leaving the mature 70S translation initiation complex. The polypeptide is Translation initiation factor IF-1 2 (Nitratidesulfovibrio vulgaris (strain ATCC 29579 / DSM 644 / CCUG 34227 / NCIMB 8303 / VKM B-1760 / Hildenborough) (Desulfovibrio vulgaris)).